Here is a 150-residue protein sequence, read N- to C-terminus: Regulatory protein RecX (150 aa).

The protein belongs to the RecX family.

The protein localises to the cytoplasm. Modulates RecA activity. The chain is Regulatory protein RecX from Ectopseudomonas mendocina (strain ymp) (Pseudomonas mendocina).